The chain runs to 591 residues: Paralemmin-3 (591 aa).

4 repeats span residues 171–174 (EKNK), 183–186 (EKNQ), 224–227 (EKNQ), and 234–237 (KNQD). Positions 282–293 (DQTQSTSDQNME) are enriched in polar residues. Disordered regions lie at residues 282–317 (DQTQSTSDQNMETKLPTDIPQQKESQSEGKIQTKDQ), 332–413 (KGTT…QNQD), and 515–591 (PDLK…CVVM). 2 stretches are compositionally biased toward basic and acidic residues: residues 306-317 (SQSEGKIQTKDQ) and 349-383 (EPKEENPKAQDEKLDHHNESVSTVHEQKEVHDMDP). 2 stretches are compositionally biased toward polar residues: residues 385-413 (QLSTHQKSLSISEDQNQGSVSLSDPQNQD) and 528-542 (QESSSHEPMSSTIAQ). A compositionally biased stretch (low complexity) spans 543–554 (SSSAEGNSSPES). The span at 559 to 575 (QKSQGTDSQQGGNTATQ) shows a compositional bias: polar residues. A Nuclear localization signal motif is present at residues 579–583 (RRKKK). Residues Cys585 and Cys587 are each lipidated (S-palmitoyl cysteine). Cysteine methyl ester is present on Cys588. Cys588 carries S-farnesyl cysteine lipidation. Positions 589-591 (VVM) are cleaved as a propeptide — removed in mature form.

This sequence belongs to the paralemmin family. In terms of processing, may be phosphorylated during oocyte maturation. Palmitoylated on Cys-585 and Cys-587 and prenylated on Cys-588; which is required for membrane association. In terms of tissue distribution, in Xenopus oocyte, in the central nervous system cells of tadpoles and adult frogs, and transiently in epithelial cells of stomach and gut of tadpoles. Highly expressed in kidney.

It localises to the cytoplasm. The protein localises to the nucleus. Its subcellular location is the cell membrane. Maternal ATP-binding protein that may have multiple functions during development, one of which may be associated with the development and maintenance of the central nervous system. In Xenopus laevis (African clawed frog), this protein is Paralemmin-3 (palm3).